The primary structure comprises 323 residues: ATP synthase gamma chain (323 aa).

The segment at 206-240 is insert; that stretch reads NPIVNLVGFGYKERGVKPINNRRATSDIVGESKSI.

The protein belongs to the ATPase gamma chain family. In terms of assembly, F-type ATPases have 2 components, CF(1) - the catalytic core - and CF(0) - the membrane proton channel. CF(1) has five subunits: alpha(3), beta(3), gamma(1), delta(1), epsilon(1). CF(0) has three main subunits: a, b and c.

Its subcellular location is the cell inner membrane. Produces ATP from ADP in the presence of a proton gradient across the membrane. The gamma chain is believed to be important in regulating ATPase activity and the flow of protons through the CF(0) complex. The polypeptide is ATP synthase gamma chain (Rickettsia conorii (strain ATCC VR-613 / Malish 7)).